Consider the following 274-residue polypeptide: Dermonecrotic toxin LspiSicTox-betaIII1 G (274 aa).

H5 is a catalytic residue. Residues E25 and D27 each coordinate Mg(2+). H41 functions as the Nucleophile in the catalytic mechanism. Disulfide bonds link C45–C51 and C47–C189. The N-linked (GlcNAc...) asparagine glycan is linked to N66. D85 is a Mg(2+) binding site.

The protein belongs to the arthropod phospholipase D family. Class II subfamily. The cofactor is Mg(2+). Expressed by the venom gland.

It localises to the secreted. The catalysed reaction is an N-(acyl)-sphingosylphosphocholine = an N-(acyl)-sphingosyl-1,3-cyclic phosphate + choline. It carries out the reaction an N-(acyl)-sphingosylphosphoethanolamine = an N-(acyl)-sphingosyl-1,3-cyclic phosphate + ethanolamine. It catalyses the reaction a 1-acyl-sn-glycero-3-phosphocholine = a 1-acyl-sn-glycero-2,3-cyclic phosphate + choline. The enzyme catalyses a 1-acyl-sn-glycero-3-phosphoethanolamine = a 1-acyl-sn-glycero-2,3-cyclic phosphate + ethanolamine. Dermonecrotic toxins cleave the phosphodiester linkage between the phosphate and headgroup of certain phospholipids (sphingolipid and lysolipid substrates), forming an alcohol (often choline) and a cyclic phosphate. This toxin acts on sphingomyelin (SM). It may also act on ceramide phosphoethanolamine (CPE), lysophosphatidylcholine (LPC) and lysophosphatidylethanolamine (LPE), but not on lysophosphatidylserine (LPS), and lysophosphatidylglycerol (LPG). It acts by transphosphatidylation, releasing exclusively cyclic phosphate products as second products. Induces dermonecrosis, hemolysis, increased vascular permeability, edema, inflammatory response, and platelet aggregation. This Loxosceles spinulosa (Recluse spider) protein is Dermonecrotic toxin LspiSicTox-betaIII1 G.